Here is a 457-residue protein sequence, read N- to C-terminus: Protein unc-93 homolog A (457 aa).

A run of 5 helical transmembrane segments spans residues 8 to 28, 42 to 62, 65 to 85, 86 to 106, and 140 to 160; these read VLVVSFGFLLLFTAYGGLQSL, ALSTLYGGMLLSSMFLPPLLI, LGCKGTIILSMCGYVAFSVGN, FFASWYTLIPTSILLGLGAAP, and IFFLIFQSSGVWGNLISSLVF. N-linked (GlcNAc...) asparagine glycosylation is present at Asn-190. Helical transmembrane passes span 202–222, 257–277, 291–311, 320–340, 344–364, and 395–415; these read TLLGIYTGSGVLAVLMIAAFL, LCLLILLPLYSGLQQGFLSSE, FVGYVMICFSATDALCSVLYG, AVLYVLGAVTHVSCMIALLLW, ADHLAVFFVFSGLWGVADAVW, and FVIAFGYSMFLCVHVKLYILL.

This sequence belongs to the unc-93 family. In terms of tissue distribution, expressed in testis, small intestine, spleen, prostate and ovary.

The protein localises to the cell membrane. The polypeptide is Protein unc-93 homolog A (UNC93A) (Homo sapiens (Human)).